The primary structure comprises 319 residues: Ribonucleoside-diphosphate reductase small chain (319 aa).

Fe cation-binding residues include D70, E101, and H104. The active site involves Y108. The Fe cation site is built by E163, E197, and H200. The interval 313 to 319 (FSLDVDF) is interaction with R1.

Belongs to the ribonucleoside diphosphate reductase small chain family. As to quaternary structure, interacts with RNR1/OPG080 subunit. Can interact with host RNR1 supunit. Fe cation is required as a cofactor.

The catalysed reaction is a 2'-deoxyribonucleoside 5'-diphosphate + [thioredoxin]-disulfide + H2O = a ribonucleoside 5'-diphosphate + [thioredoxin]-dithiol. In terms of biological role, ribonucleoside-diphosphate reductase holoenzyme provides the precursors necessary for viral DNA synthesis. Allows virus growth in non-dividing cells. Catalyzes the biosynthesis of deoxyribonucleotides from the corresponding ribonucleotides. The protein is Ribonucleoside-diphosphate reductase small chain (OPG048) of Vaccinia virus (strain Copenhagen) (VACV).